We begin with the raw amino-acid sequence, 903 residues long: MLGLGSIAKKVFGSPNDRLVKSVRPIIAKINDMEPEFEALDDAGIVAKTAELRNRALNGEKLDDLLPEAFANCREAAKRALGLRAFDVQLIGGLFLHRGNIAEMKTGEGKTLVATFPAYLNGLTGEGVHVVTVNDYLAKRDSEWMGKVFTALGMTTGVVYPRQPDQEKRQAYACDVTYATNNELGFDYLRDNMRGSIAEMAQRGHNFAIVDEVDSILIDEARTPLIISGPTQDRSDLYMSIDKVIPLVQEHHYTLDEKTRQATFTDEGNDFLEETLSAEGILPEGQSLYDPESTTIVHHVTNALRAHKVFTKDKEYIVRDGEVVLVDEFTGRMMPGRRMSEGLHQAIEAKEGCKIQPENVTLASVTFQNYFRLYGTLGGMTGTATTEAEEFADIYGLGVVEIPTNRDIARIDDDDAVYRTGQEKYDAIVETIAEAHKKGQPVLVGTTSIEKSEMLGQLLTKADLPHSILNARQHEQEAQIVADAGKLGAVTIATNMAGRGTDIKLGGNLEFQIMEAIAADPDADPEEIRNRMEVEHATAEQAVKDAGGLYVLATERHESRRIDNQLRGRSGRQGDPGRSSFFLSLEDDLMRIFGSERLDKMLNTLGMKEGEAIVHPWVNKSLERAQAKVEGRNFDIRKQLLKFDDVMNDQRKVVFGQRRDIMGAEDIAEVAKDMRDQVIEDMVDTYMPPKTYADQWDVLGMKEAAQTTLGIDLPIEAWADEDGVDQEVATERLERAADEYMASKAAKFGPEQMRNIEKQVLLQTIDQKWQEHLLTLEHLRSVVGFRGYAQRDPLNEYKTESFQLFESMLDGLRTDVTEKLARIQPLTPEQQEQLMAQLRQQQAAAAGTEAVASAGGETGETAFPNAIPGFIEDDPSTWGNPGRNDDCPCGSGKKFKHCHGRLA.

ATP-binding positions include Q89, 107-111 (GEGKT), and D502. Zn(2+) contacts are provided by C887, C889, C898, and H899.

It belongs to the SecA family. As to quaternary structure, monomer and homodimer. Part of the essential Sec protein translocation apparatus which comprises SecA, SecYEG and auxiliary proteins SecDF-YajC and YidC. It depends on Zn(2+) as a cofactor.

It is found in the cell inner membrane. It localises to the cytoplasm. The enzyme catalyses ATP + H2O + cellular proteinSide 1 = ADP + phosphate + cellular proteinSide 2.. Its function is as follows. Part of the Sec protein translocase complex. Interacts with the SecYEG preprotein conducting channel. Has a central role in coupling the hydrolysis of ATP to the transfer of proteins into and across the cell membrane, serving both as a receptor for the preprotein-SecB complex and as an ATP-driven molecular motor driving the stepwise translocation of polypeptide chains across the membrane. The chain is Protein translocase subunit SecA from Jannaschia sp. (strain CCS1).